A 153-amino-acid polypeptide reads, in one-letter code: Peptidyl-prolyl cis-trans isomerase FKBP15-1 (153 aa).

Residues 1–25 (MMSSASAMKAVGFLLLLTILTLAYA) form the signal peptide. The region spanning 52–140 (GDKIKVHYRG…IFDTELVAVN (89 aa)) is the PPIase FKBP-type domain. Residues 150–153 (KNEL) carry the Prevents secretion from ER motif.

The protein belongs to the FKBP-type PPIase family.

It localises to the endoplasmic reticulum lumen. The catalysed reaction is [protein]-peptidylproline (omega=180) = [protein]-peptidylproline (omega=0). PPIases accelerate the folding of proteins. It catalyzes the cis-trans isomerization of proline imidic peptide bonds in oligopeptides. The protein is Peptidyl-prolyl cis-trans isomerase FKBP15-1 (FKBP15-1) of Arabidopsis thaliana (Mouse-ear cress).